A 989-amino-acid polypeptide reads, in one-letter code: Mediator of RNA polymerase II transcription subunit 24 (989 aa).

Short sequence motifs (LXXLL motif) lie at residues 343 to 347, 359 to 363, 447 to 451, 556 to 560, 787 to 791, and 857 to 861; these read LTPLL, LSLLL, LDLLL, LVALL, LPRLL, and LMRLL.

Belongs to the Mediator complex subunit 24 family. As to quaternary structure, component of the Mediator complex.

It localises to the nucleus. In terms of biological role, component of the Mediator complex, a coactivator involved in the regulated transcription of nearly all RNA polymerase II-dependent genes. Mediator functions as a bridge to convey information from gene-specific regulatory proteins to the basal RNA polymerase II transcription machinery. Mediator is recruited to promoters by direct interactions with regulatory proteins and serves as a scaffold for the assembly of a functional preinitiation complex with RNA polymerase II and the general transcription factors. Required for proliferation of enteric nervous system precursors. Required for the development of dopaminergic amacrine cells and rod photoreceptor cells in the retina. The protein is Mediator of RNA polymerase II transcription subunit 24 (med24) of Danio rerio (Zebrafish).